Here is a 397-residue protein sequence, read N- to C-terminus: Succinate--CoA ligase [ADP-forming] subunit beta (397 aa).

In terms of domain architecture, ATP-grasp spans 9-253 (KEILASYGVR…IREENPIEVE (245 aa)). Residues Lys50, 57-59 (GRG), Val106, and Glu116 contribute to the ATP site. Mg(2+) contacts are provided by Asn208 and Asp222. Substrate is bound by residues Asn273 and 330–332 (GIV).

This sequence belongs to the succinate/malate CoA ligase beta subunit family. As to quaternary structure, heterotetramer of two alpha and two beta subunits. Requires Mg(2+) as cofactor.

The catalysed reaction is succinate + ATP + CoA = succinyl-CoA + ADP + phosphate. It catalyses the reaction GTP + succinate + CoA = succinyl-CoA + GDP + phosphate. Its pathway is carbohydrate metabolism; tricarboxylic acid cycle; succinate from succinyl-CoA (ligase route): step 1/1. Succinyl-CoA synthetase functions in the citric acid cycle (TCA), coupling the hydrolysis of succinyl-CoA to the synthesis of either ATP or GTP and thus represents the only step of substrate-level phosphorylation in the TCA. The beta subunit provides nucleotide specificity of the enzyme and binds the substrate succinate, while the binding sites for coenzyme A and phosphate are found in the alpha subunit. The sequence is that of Succinate--CoA ligase [ADP-forming] subunit beta from Flavobacterium johnsoniae (strain ATCC 17061 / DSM 2064 / JCM 8514 / BCRC 14874 / CCUG 350202 / NBRC 14942 / NCIMB 11054 / UW101) (Cytophaga johnsonae).